Here is a 225-residue protein sequence, read N- to C-terminus: O-methyltransferase rstn1 (225 aa).

S-adenosyl-L-methionine contacts are provided by Gln-97 and His-142.

It belongs to the methyltransferase superfamily.

The catalysed reaction is desmethylrestrictinol + S-adenosyl-L-methionine = restrictinol + S-adenosyl-L-homocysteine + H(+). It participates in antifungal biosynthesis. In terms of biological role, O-methyltransferase; part of the gene cluster that mediates the biosynthesis of the tetrahydropyranyl antifungal agent restricticin that acts as an inhibitor of CYP51 and blocks the ergosterol biosynthesis. Within the pathway, rstn1 uses S-adenosylmethionine to methylate position C4 of desmethylrestrictinol to produce restrictinol. The highly reducing polyketide synthase rstn3, the short chain dehydrogenase rstn4, the cyclase rstn5, the FAD-dependent monooxygenase rstn6 and the enoylreductase rstn7 are required to generate the first stable intermediate desmethylrestrictinol. Rstn3 with rstn7 biosynthesize the first polyketide chain intermediate that is reduced by rstn4, followed by epoxidation by rstn6 before 6-endo cyclization via epoxide opening by rstn5 leads to desmethylrestrictinol. The methyltransferase rstn1 then catalyzes the C4 O-methylation of desmethylrestrictinol to produce restrictinol, and the nonribosomal peptide synthetase rstn8 catalyzes the C3 esterification of restrictinol with glycine that leads to restricticin. This is O-methyltransferase rstn1 from Aspergillus nomiae NRRL (strain ATCC 15546 / NRRL 13137 / CBS 260.88 / M93).